The sequence spans 126 residues: Nuclear transport factor 2B (126 aa).

Ser2 carries the post-translational modification N-acetylserine. In terms of domain architecture, NTF2 spans 9–123 (VSKAFVEHYY…FYVFNDIFRL (115 aa)).

As to quaternary structure, interacts with RAN1. In terms of tissue distribution, expressed in roots, stems, leaves and flowers, and, at low levels, in siliques.

Its subcellular location is the cytoplasm. It localises to the nucleus. It is found in the nucleus envelope. Functionally, facilitates protein transport into the nucleus. Interacts with various nucleoporins and with Ran-GDP. Could be part of a multicomponent system of cytosolic factors that assemble at the pore complex during nuclear import. This Arabidopsis thaliana (Mouse-ear cress) protein is Nuclear transport factor 2B.